Here is a 405-residue protein sequence, read N- to C-terminus: 11-beta-hydroxysteroid dehydrogenase type 2 (405 aa).

Position 82–111 (82–111) interacts with NAD(+); it reads TRAVLITGCDSGFGKETAKKLDSMGFTVLA. Serine 219 is a binding site for substrate. Tyrosine 232 serves as the catalytic Proton acceptor. The essential for protein stability stretch occupies residues 335–339; the sequence is RRRYY. Residues 377–387 are compositionally biased toward low complexity; that stretch reads QPGQPGTTPPQ. Residues 377–405 form a disordered region; sequence QPGQPGTTPPQDAAQDPNLSPGPSPAVAR. Residues 396 to 405 are compositionally biased toward pro residues; sequence SPGPSPAVAR.

Belongs to the short-chain dehydrogenases/reductases (SDR) family. Interacts with ligand-free cytoplasmic NR3C2. As to expression, expressed in kidney, placenta, pancreas, prostate, ovary, small intestine and colon, and in lower levels in the spleen and testis. At midgestation, expressed at high levels in placenta and in fetal kidney and, at much lower levels, in fetal lung and testis.

The protein localises to the microsome. The protein resides in the endoplasmic reticulum. The catalysed reaction is an 11beta-hydroxysteroid + NAD(+) = an 11-oxosteroid + NADH + H(+). It carries out the reaction cortisol + NAD(+) = cortisone + NADH + H(+). It catalyses the reaction corticosterone + NAD(+) = 11-dehydrocorticosterone + NADH + H(+). The enzyme catalyses 11beta,17beta-dihydroxyandrost-4-ene-3-one + NAD(+) = 17beta-hydroxyandrost-4-ene-3,11-dione + NADH + H(+). The catalysed reaction is 11beta-hydroxyandrost-4-ene-3,17-dione + NAD(+) = androst-4-ene-3,11,17-trione + NADH + H(+). It participates in steroid metabolism. With respect to regulation, inhibited by glycyrrhetinic acid (derived from liquorice). Catalyzes the conversion of biologically active 11beta-hydroxyglucocorticoids (11beta-hydroxysteroid) such as cortisol, to inactive 11-ketoglucocorticoids (11-oxosteroid) such as cortisone, in the presence of NAD(+). Functions as a dehydrogenase (oxidase), thereby decreasing the concentration of active glucocorticoids, thus protecting the nonselective mineralocorticoid receptor from occupation by glucocorticoids. Plays an important role in maintaining glucocorticoids balance during preimplantation and protects the fetus from excessive maternal corticosterone exposure. Catalyzes the oxidation of 11beta-hydroxytestosterone (11beta,17beta-dihydroxyandrost-4-ene-3-one) to 11-ketotestosterone (17beta-hydroxyandrost-4-ene-3,11-dione), a major bioactive androgen. Catalyzes the conversion of 11beta-hydroxyandrostenedione (11beta-hydroxyandrost-4-ene-3,17-dione) to 11-ketoandrostenedione (androst-4-ene-3,11,17-trione), which can be further metabolized to 11-ketotestosterone. Converts 7-beta-25-dihydroxycholesterol to 7-oxo-25-hydroxycholesterol in vitro. 7-beta-25-dihydroxycholesterol (not 7-oxo-25-hydroxycholesterol) acts as a ligand for the G-protein-coupled receptor (GPCR) Epstein-Barr virus-induced gene 2 (EBI2) and may thereby regulate immune cell migration. May protect ovulating oocytes and fertilizing spermatozoa from the adverse effects of cortisol. In Homo sapiens (Human), this protein is 11-beta-hydroxysteroid dehydrogenase type 2.